The primary structure comprises 120 residues: uncharacterized protein (120 aa).

This sequence to the N-terminal region of phage HK97/HK620 Gp37/hpaH.

This is an uncharacterized protein from Escherichia coli (strain K12).